Reading from the N-terminus, the 341-residue chain is Solute carrier family 25 member 43 (341 aa).

3 Solcar repeats span residues 11 to 101 (TGSQ…MDDL), 105 to 185 (SQWS…LLVY), and 200 to 298 (SHLQ…LYQN). The next 6 helical transmembrane spans lie at 16–36 (LLCA…LELA), 68–88 (LWKG…VQLA), 110–130 (IVTG…TDLI), 166–186 (GVSL…LVYM), 205–225 (FANV…FDTV), and 262–282 (VLGL…YFGV).

The protein belongs to the mitochondrial carrier (TC 2.A.29) family.

The protein localises to the mitochondrion inner membrane. This is Solute carrier family 25 member 43 (Slc25a43) from Mus musculus (Mouse).